Here is a 360-residue protein sequence, read N- to C-terminus: Phosphoserine aminotransferase (360 aa).

Arginine 41 lines the L-glutamate pocket. Pyridoxal 5'-phosphate is bound by residues tryptophan 101, threonine 152, aspartate 172, and glutamine 195. Lysine 196 bears the N6-(pyridoxal phosphate)lysine mark. Asparagine 237–threonine 238 is a pyridoxal 5'-phosphate binding site.

This sequence belongs to the class-V pyridoxal-phosphate-dependent aminotransferase family. SerC subfamily. As to quaternary structure, homodimer. Requires pyridoxal 5'-phosphate as cofactor.

Its subcellular location is the cytoplasm. The enzyme catalyses O-phospho-L-serine + 2-oxoglutarate = 3-phosphooxypyruvate + L-glutamate. It catalyses the reaction 4-(phosphooxy)-L-threonine + 2-oxoglutarate = (R)-3-hydroxy-2-oxo-4-phosphooxybutanoate + L-glutamate. The protein operates within amino-acid biosynthesis; L-serine biosynthesis; L-serine from 3-phospho-D-glycerate: step 2/3. It participates in cofactor biosynthesis; pyridoxine 5'-phosphate biosynthesis; pyridoxine 5'-phosphate from D-erythrose 4-phosphate: step 3/5. Catalyzes the reversible conversion of 3-phosphohydroxypyruvate to phosphoserine and of 3-hydroxy-2-oxo-4-phosphonooxybutanoate to phosphohydroxythreonine. The chain is Phosphoserine aminotransferase from Burkholderia ambifaria (strain ATCC BAA-244 / DSM 16087 / CCUG 44356 / LMG 19182 / AMMD) (Burkholderia cepacia (strain AMMD)).